The primary structure comprises 61 residues: Large ribosomal subunit protein uL30 (61 aa).

It belongs to the universal ribosomal protein uL30 family. As to quaternary structure, part of the 50S ribosomal subunit.

This Thermosipho melanesiensis (strain DSM 12029 / CIP 104789 / BI429) protein is Large ribosomal subunit protein uL30.